The chain runs to 373 residues: Queuine tRNA-ribosyltransferase (373 aa).

The active-site Proton acceptor is the Asp90. Residues 90-94, Asp144, Gln193, and Gly220 each bind substrate; that span reads DSGGF. The segment at 251 to 257 is RNA binding; the sequence is GVGTPED. Residue Asp270 is the Nucleophile of the active site. Residues 275–279 are RNA binding; important for wobble base 34 recognition; the sequence is TRNAR. Cys308, Cys310, Cys313, and His339 together coordinate Zn(2+).

This sequence belongs to the queuine tRNA-ribosyltransferase family. As to quaternary structure, homodimer. Within each dimer, one monomer is responsible for RNA recognition and catalysis, while the other monomer binds to the replacement base PreQ1. The cofactor is Zn(2+).

The enzyme catalyses 7-aminomethyl-7-carbaguanine + guanosine(34) in tRNA = 7-aminomethyl-7-carbaguanosine(34) in tRNA + guanine. It participates in tRNA modification; tRNA-queuosine biosynthesis. Catalyzes the base-exchange of a guanine (G) residue with the queuine precursor 7-aminomethyl-7-deazaguanine (PreQ1) at position 34 (anticodon wobble position) in tRNAs with GU(N) anticodons (tRNA-Asp, -Asn, -His and -Tyr). Catalysis occurs through a double-displacement mechanism. The nucleophile active site attacks the C1' of nucleotide 34 to detach the guanine base from the RNA, forming a covalent enzyme-RNA intermediate. The proton acceptor active site deprotonates the incoming PreQ1, allowing a nucleophilic attack on the C1' of the ribose to form the product. After dissociation, two additional enzymatic reactions on the tRNA convert PreQ1 to queuine (Q), resulting in the hypermodified nucleoside queuosine (7-(((4,5-cis-dihydroxy-2-cyclopenten-1-yl)amino)methyl)-7-deazaguanosine). This chain is Queuine tRNA-ribosyltransferase, found in Campylobacter jejuni subsp. jejuni serotype O:2 (strain ATCC 700819 / NCTC 11168).